The primary structure comprises 535 residues: Dimethylaniline monooxygenase [N-oxide-forming] 2 (535 aa).

FAD is bound by residues 9–13, Glu32, 40–41, and 61–62; these read GAGVS, LW, and NT. NADP(+) is bound by residues 60–61 and 195–198; these read TN and SAAD. Lys492 participates in a covalent cross-link: Glycyl lysine isopeptide (Lys-Gly) (interchain with G-Cter in SUMO). Residues 510–530 form a helical membrane-spanning segment; that stretch reads APVSFLIKVLGLLAIVLAFFF.

This sequence belongs to the FMO family. It depends on FAD as a cofactor. Mg(2+) is required as a cofactor.

The protein resides in the microsome membrane. It localises to the endoplasmic reticulum membrane. In terms of biological role, catalyzes the oxidative metabolism of numerous xenobiotics, including mainly therapeutic drugs and insecticides that contain a soft nucleophile, most commonly nitrogen and sulfur and participates to their bioactivation. This chain is Dimethylaniline monooxygenase [N-oxide-forming] 2, found in Rattus norvegicus (Rat).